The following is a 429-amino-acid chain: Saccharopine dehydrogenase-like oxidoreductase (429 aa).

At A2 the chain carries N-acetylalanine. S209, S215, and S217 each carry phosphoserine.

Belongs to the saccharopine dehydrogenase family.

The chain is Saccharopine dehydrogenase-like oxidoreductase (Sccpdh) from Mus musculus (Mouse).